Reading from the N-terminus, the 205-residue chain is Dephospho-CoA kinase (205 aa).

Residues 3–204 (KVGLTGGIGA…HRAHQPGESQ (202 aa)) form the DPCK domain. 11-16 (GAGKSE) lines the ATP pocket.

It belongs to the CoaE family.

The protein localises to the cytoplasm. The catalysed reaction is 3'-dephospho-CoA + ATP = ADP + CoA + H(+). It participates in cofactor biosynthesis; coenzyme A biosynthesis; CoA from (R)-pantothenate: step 5/5. Its function is as follows. Catalyzes the phosphorylation of the 3'-hydroxyl group of dephosphocoenzyme A to form coenzyme A. The chain is Dephospho-CoA kinase from Streptomyces avermitilis (strain ATCC 31267 / DSM 46492 / JCM 5070 / NBRC 14893 / NCIMB 12804 / NRRL 8165 / MA-4680).